The chain runs to 270 residues: Orotidine 5'-phosphate decarboxylase (270 aa).

The Proton donor role is filled by Lys-95.

The protein belongs to the OMP decarboxylase family. Type 2 subfamily.

It catalyses the reaction orotidine 5'-phosphate + H(+) = UMP + CO2. The protein operates within pyrimidine metabolism; UMP biosynthesis via de novo pathway; UMP from orotate: step 2/2. The chain is Orotidine 5'-phosphate decarboxylase from Azoarcus sp. (strain BH72).